A 120-amino-acid polypeptide reads, in one-letter code: Large ribosomal subunit protein bL36m (120 aa).

It belongs to the bacterial ribosomal protein bL36 family. Component of the mitochondrial ribosome large subunit (39S) which comprises a 16S rRNA and about 50 distinct proteins.

It is found in the mitochondrion. The sequence is that of Large ribosomal subunit protein bL36m (mrpl36) from Osmerus mordax (Rainbow smelt).